The sequence spans 300 residues: Small ribosomal subunit protein uS2 (300 aa).

Residues 269 to 300 (WEADGADWAASSAAAPAESWAAEAQGAEGAKW) are disordered.

This sequence belongs to the universal ribosomal protein uS2 family. In terms of assembly, component of the small ribosomal subunit. Mature ribosomes consist of a small (40S) and a large (60S) subunit. The 40S subunit contains about 33 different proteins and 1 molecule of RNA (18S). The 60S subunit contains about 49 different proteins and 3 molecules of RNA (25S, 5.8S and 5S). Interacts with rps21.

It localises to the cytoplasm. Functionally, required for the assembly and/or stability of the 40S ribosomal subunit. Required for the processing of the 20S rRNA-precursor to mature 18S rRNA in a late step of the maturation of 40S ribosomal subunits. The protein is Small ribosomal subunit protein uS2 (rps0) of Aspergillus terreus (strain NIH 2624 / FGSC A1156).